We begin with the raw amino-acid sequence, 105 residues long: Heat shock protein HspQ (105 aa).

The tract at residues 74 to 105 is disordered; that stretch reads SSELQDERPEQPSMDELAQTIRKQRQAPRLRN. The span at 95 to 105 shows a compositional bias: basic residues; it reads RKQRQAPRLRN.

It belongs to the HspQ family.

The protein resides in the cytoplasm. In terms of biological role, involved in the degradation of certain denaturated proteins, including DnaA, during heat shock stress. The polypeptide is Heat shock protein HspQ (Shigella dysenteriae serotype 1 (strain Sd197)).